Here is a 283-residue protein sequence, read N- to C-terminus: MASKLCRSRALASALRSAKPSPAIRCLATTSRNLINMPEGPNPRQFPREPLPGALNAAVVNPADKYQSKADNLHKYGSWLMGCLPKYIQQFSVWKDELTIYISPAGVIPVFSFLKYNTAAEYTQVSDITAVDFPTKDQRFEVVYNLLSVRHNSRIRVKTYADEVSPVPSITPLYDGANWYEREVYDLFGVFFTGHPDLRRIMTDYGFDGHPLRKDFPMTGYTEIRYDEEKKRIVTEPLEMTQAFRNFEGGSSAWEQVGAGIDRKPESFKLPTPKPETKPEEKK.

The transit peptide at 1-17 (MASKLCRSRALASALRS) directs the protein to the mitochondrion. Residues 258 to 283 (GAGIDRKPESFKLPTPKPETKPEEKK) form a disordered region.

Belongs to the complex I 30 kDa subunit family. In terms of assembly, complex I is composed of about 40 different subunits. This is a component of the iron-sulfur protein fraction.

It is found in the mitochondrion inner membrane. It carries out the reaction a ubiquinone + NADH + 5 H(+)(in) = a ubiquinol + NAD(+) + 4 H(+)(out). Its function is as follows. Core subunit of the mitochondrial membrane respiratory chain NADH dehydrogenase (Complex I) that is believed to belong to the minimal assembly required for catalysis. Complex I functions in the transfer of electrons from NADH to the respiratory chain. The immediate electron acceptor for the enzyme is believed to be ubiquinone. This Neurospora crassa (strain ATCC 24698 / 74-OR23-1A / CBS 708.71 / DSM 1257 / FGSC 987) protein is NADH-ubiquinone oxidoreductase 30.4 kDa subunit, mitochondrial (nuo-31).